Consider the following 268-residue polypeptide: Resolvase (268 aa).

A Tyr recombinase domain is found at 47 to 250 (ELPKYLLAPE…FALDVAARHR (204 aa)). Active-site residues include Arg82, Lys114, His202, Arg205, and His228. Tyr237 acts as the O-(3'-phospho-DNA)-tyrosine intermediate in catalysis.

This sequence belongs to the 'phage' integrase family.

Functionally, acts as a repressor of transcription and as a site-specific resolvase that cleaves at the RfsF site. The protein is Resolvase (resD) of Escherichia coli (strain K12).